We begin with the raw amino-acid sequence, 117 residues long: MDKKSARIRRATRARRKLKELGATRLVVHRTPRHIYAQVIAPNGSEVLVAASTVEKAIAEQLKYTGNKDAAAAVGKAVAERALEKGIKDVSFDRSGFQYHGRVQALADAAREAGLQF.

It belongs to the universal ribosomal protein uL18 family. Part of the 50S ribosomal subunit; part of the 5S rRNA/L5/L18/L25 subcomplex. Contacts the 5S and 23S rRNAs.

Its function is as follows. This is one of the proteins that bind and probably mediate the attachment of the 5S RNA into the large ribosomal subunit, where it forms part of the central protuberance. This Cronobacter sakazakii (strain ATCC BAA-894) (Enterobacter sakazakii) protein is Large ribosomal subunit protein uL18.